Here is a 1379-residue protein sequence, read N- to C-terminus: DNA-directed RNA polymerase subunit beta (1379 aa).

It belongs to the RNA polymerase beta chain family. In terms of assembly, the RNAP catalytic core consists of 2 alpha, 1 beta, 1 beta' and 1 omega subunit. When a sigma factor is associated with the core the holoenzyme is formed, which can initiate transcription.

The enzyme catalyses RNA(n) + a ribonucleoside 5'-triphosphate = RNA(n+1) + diphosphate. Its function is as follows. DNA-dependent RNA polymerase catalyzes the transcription of DNA into RNA using the four ribonucleoside triphosphates as substrates. This chain is DNA-directed RNA polymerase subunit beta, found in Campylobacter fetus subsp. fetus (strain 82-40).